A 387-amino-acid polypeptide reads, in one-letter code: Succinate--CoA ligase [ADP-forming] subunit beta (387 aa).

The region spanning 9–243 (KEILSTYGIP…YSQLDPLEIT (235 aa)) is the ATP-grasp domain. ATP-binding positions include lysine 45, 52–54 (GRG), glutamate 98, valine 101, and glutamate 106. Asparagine 198 and aspartate 212 together coordinate Mg(2+). Residues asparagine 263 and 320-322 (GIM) each bind substrate.

Belongs to the succinate/malate CoA ligase beta subunit family. In terms of assembly, heterotetramer of two alpha and two beta subunits. It depends on Mg(2+) as a cofactor.

It carries out the reaction succinate + ATP + CoA = succinyl-CoA + ADP + phosphate. The enzyme catalyses GTP + succinate + CoA = succinyl-CoA + GDP + phosphate. The protein operates within carbohydrate metabolism; tricarboxylic acid cycle; succinate from succinyl-CoA (ligase route): step 1/1. Succinyl-CoA synthetase functions in the citric acid cycle (TCA), coupling the hydrolysis of succinyl-CoA to the synthesis of either ATP or GTP and thus represents the only step of substrate-level phosphorylation in the TCA. The beta subunit provides nucleotide specificity of the enzyme and binds the substrate succinate, while the binding sites for coenzyme A and phosphate are found in the alpha subunit. This Trichlorobacter lovleyi (strain ATCC BAA-1151 / DSM 17278 / SZ) (Geobacter lovleyi) protein is Succinate--CoA ligase [ADP-forming] subunit beta.